A 263-amino-acid chain; its full sequence is Hemin import ATP-binding protein HmuV (263 aa).

The region spanning 2 to 242 is the ABC transporter domain; it reads IEARDVSVDI…DLIEKVFDCR (241 aa). Position 34–41 (34–41) interacts with ATP; it reads GPNGSGKT.

It belongs to the ABC transporter superfamily. Heme (hemin) importer (TC 3.A.1.14.5) family. As to quaternary structure, the complex is composed of two ATP-binding proteins (HmuV), two transmembrane proteins (HmuU) and a solute-binding protein (HmuT).

It is found in the cell inner membrane. Its function is as follows. Part of the ABC transporter complex HmuTUV involved in hemin import. Responsible for energy coupling to the transport system. The chain is Hemin import ATP-binding protein HmuV from Mesorhizobium japonicum (strain LMG 29417 / CECT 9101 / MAFF 303099) (Mesorhizobium loti (strain MAFF 303099)).